The following is a 125-amino-acid chain: Small ribosomal subunit protein uS13 (125 aa).

Residues 92–125 (RRSLPVRGQRTQTNARTRKGKRKTVAGKKKATKK) form a disordered region. Residues 107-125 (RTRKGKRKTVAGKKKATKK) show a composition bias toward basic residues.

The protein belongs to the universal ribosomal protein uS13 family. As to quaternary structure, part of the 30S ribosomal subunit. Forms a loose heterodimer with protein S19. Forms two bridges to the 50S subunit in the 70S ribosome.

Functionally, located at the top of the head of the 30S subunit, it contacts several helices of the 16S rRNA. In the 70S ribosome it contacts the 23S rRNA (bridge B1a) and protein L5 of the 50S subunit (bridge B1b), connecting the 2 subunits; these bridges are implicated in subunit movement. Contacts the tRNAs in the A and P-sites. This Chlorobium phaeobacteroides (strain DSM 266 / SMG 266 / 2430) protein is Small ribosomal subunit protein uS13.